The sequence spans 706 residues: Elongation factor G (706 aa).

One can recognise a tr-type G domain in the interval 8 to 297 (SYVRNIGIGA…AVVDYLPSPN (290 aa)). GTP contacts are provided by residues 17–24 (AHIDAGKT), 95–99 (DTPGH), and 149–152 (NKMD).

The protein belongs to the TRAFAC class translation factor GTPase superfamily. Classic translation factor GTPase family. EF-G/EF-2 subfamily.

It localises to the cytoplasm. Catalyzes the GTP-dependent ribosomal translocation step during translation elongation. During this step, the ribosome changes from the pre-translocational (PRE) to the post-translocational (POST) state as the newly formed A-site-bound peptidyl-tRNA and P-site-bound deacylated tRNA move to the P and E sites, respectively. Catalyzes the coordinated movement of the two tRNA molecules, the mRNA and conformational changes in the ribosome. In Orientia tsutsugamushi (strain Ikeda) (Rickettsia tsutsugamushi), this protein is Elongation factor G.